We begin with the raw amino-acid sequence, 63 residues long: Large ribosomal subunit protein uL29 (63 aa).

The protein belongs to the universal ribosomal protein uL29 family.

The chain is Large ribosomal subunit protein uL29 from Azotobacter vinelandii (strain DJ / ATCC BAA-1303).